A 349-amino-acid chain; its full sequence is Ureidoglycolate dehydrogenase (NAD(+)) (349 aa).

The active-site Proton acceptor is the His116. NAD(+) contacts are provided by residues Ser140, 174-176, Lys224, and 306-308; these read DMA and GQD.

The protein belongs to the LDH2/MDH2 oxidoreductase family. As to quaternary structure, homodimer.

The protein resides in the cytoplasm. It catalyses the reaction (S)-ureidoglycolate + NAD(+) = N-carbamoyl-2-oxoglycine + NADH + H(+). Its pathway is nitrogen metabolism; (S)-allantoin degradation; oxalurate from (S)-ureidoglycolate: step 1/1. In terms of biological role, allD plays a pivotal role as a metabolic branch-point enzyme in nitrogen utilization via the assimilation of allantoin. It is able to utilize allantoin as a sole source of nitrogen under anaerobic conditions. Catalyzes the oxidation of ureidoglycolate to oxalurate. In Escherichia coli (strain K12), this protein is Ureidoglycolate dehydrogenase (NAD(+)).